Reading from the N-terminus, the 380-residue chain is Coiled-coil domain-containing protein 74B (380 aa).

Disordered regions lie at residues 1-51, 89-108, and 128-202; these read MSGA…KRNL, LIMN…HLSR, and GGPS…DVPQ. Polar residues predominate over residues 34 to 44; that stretch reads LRPQSPQLRQS. Positions 47–93 form a coiled coil; sequence QKRNLDLEKSLQFLQQQHSEMLAKLHEEIEHLKRENKDLRYKLIMNQ. Over residues 141–151 the composition is skewed to basic residues; that stretch reads RTHRPGGKHGR. Polar residues predominate over residues 165-182; it reads DSLSTSSFQSVKSISNSG.

The protein is Coiled-coil domain-containing protein 74B (CCDC74B) of Homo sapiens (Human).